The primary structure comprises 146 residues: 3-dehydroquinate dehydratase (146 aa).

The active-site Proton acceptor is the Tyr-22. The substrate site is built by Asn-74, His-80, and Asp-87. His-100 acts as the Proton donor in catalysis. Residues 101–102 (LS) and Arg-111 each bind substrate.

The protein belongs to the type-II 3-dehydroquinase family. As to quaternary structure, homododecamer.

The enzyme catalyses 3-dehydroquinate = 3-dehydroshikimate + H2O. The protein operates within metabolic intermediate biosynthesis; chorismate biosynthesis; chorismate from D-erythrose 4-phosphate and phosphoenolpyruvate: step 3/7. Functionally, catalyzes a trans-dehydration via an enolate intermediate. This is 3-dehydroquinate dehydratase from Clostridium beijerinckii (strain ATCC 51743 / NCIMB 8052) (Clostridium acetobutylicum).